The sequence spans 472 residues: POU domain, class 5, transcription factor 1 (472 aa).

Disordered stretches follow at residues 127–154 (MPSEVKTEKDVEEYGNEENKPPSQYHLT) and 187–255 (ISQA…LTTE). The segment covering 220–234 (TAQNIPSAQAQSAPR) has biased composition (polar residues). The span at 235–245 (SSGSSSGGCSN) shows a compositional bias: low complexity. Over residues 246–255 (SEEEETLTTE) the composition is skewed to acidic residues. The POU-specific domain maps to 249–323 (EETLTTEDLE…LLQRWLNEAE (75 aa)). Residues 343–402 (KRKRRTSLEGTVRSALESYFVKCPKPNTLEITHISDDLGLERDVVRVWFCNRRQKGKRLA) constitute a DNA-binding region (homeobox).

Belongs to the POU transcription factor family. Class-7 subfamily.

The protein localises to the nucleus. Involved in early development of embryos, especially in the process of gastrulation. May play an important role in establishing and specifying rhombomeric segments. Seems to be required to maintain the cells in a highly undifferentiated state. In contrast to POU2, T-POU2 lacks DNA-binding activity because of its incomplete pou domain structure. Overexpression of POU2 does not have any effect on development, whereas overexpression of t-POU2 causes developmental retardation or arrest before gastrulation. The chain is POU domain, class 5, transcription factor 1 (pou5f1) from Danio rerio (Zebrafish).